A 143-amino-acid polypeptide reads, in one-letter code: Mite group 2 allergen Pso o 2 (143 aa).

The signal sequence occupies residues 1–17; sequence MMKTLVVLAITLAVVSA. Disulfide bonds link cysteine 25/cysteine 134, cysteine 38/cysteine 43, and cysteine 89/cysteine 94.

This sequence belongs to the NPC2 family.

It localises to the secreted. The polypeptide is Mite group 2 allergen Pso o 2 (ALLA) (Psoroptes ovis (Sheep scab mite)).